We begin with the raw amino-acid sequence, 188 residues long: Insulin-like growth factor 1 (188 aa).

Positions 45–73 are b; the sequence is GPETLCGAELVDTLQFVCGERGFYFSKPT. 3 cysteine pairs are disulfide-bonded: Cys50–Cys92, Cys62–Cys105, and Cys91–Cys96. Positions 74 to 85 are c; the sequence is GYGPSSRRSHNR. The a stretch occupies residues 86–106; it reads GIVDECCFQSCELRRLEMYCA. Residues 107–114 form a d region; that stretch reads PVKSGKAA. The propeptide at 115 to 188 is e peptide; that stretch reads RSVRAQRHTD…GNTGGRNYRM (74 aa). Residues 115–188 form a disordered region; sequence RSVRAQRHTD…GNTGGRNYRM (74 aa). The span at 140-153 shows a compositional bias: basic and acidic residues; the sequence is RGTERRTAQHPDKT.

The protein belongs to the insulin family. As to expression, all the isoforms are expressed in embryos, juvenile and adult liver, muscle and brain. At least one isoform is expressed in heart, kidney, testes, ovary, adipose tissue and spleen of juvenile salmon.

It is found in the secreted. The insulin-like growth factors, isolated from plasma, are structurally and functionally related to insulin but have a much higher growth-promoting activity. Acts as a ligand for IGF1R. Binds to the alpha subunit of IGF1R, leading to the activation of the intrinsic tyrosine kinase activity which autophosphorylates tyrosine residues in the beta subunit thus initiatiating a cascade of down-stream signaling events leading to activation of the PI3K-AKT/PKB and the Ras-MAPK pathways. Binds to integrins. Its binding to integrins and subsequent ternary complex formation with integrins and IGFR1 are essential for IGF1 signaling. This chain is Insulin-like growth factor 1, found in Oncorhynchus kisutch (Coho salmon).